Reading from the N-terminus, the 76-residue chain is ATP synthase subunit c (76 aa).

The next 2 membrane-spanning stretches (helical) occupy residues 13–33 (LNVV…GILI) and 55–75 (FLGL…AFIF).

This sequence belongs to the ATPase C chain family. F-type ATPases have 2 components, F(1) - the catalytic core - and F(0) - the membrane proton channel. F(1) has five subunits: alpha(3), beta(3), gamma(1), delta(1), epsilon(1). F(0) has three main subunits: a(1), b(2) and c(10-14). The alpha and beta chains form an alternating ring which encloses part of the gamma chain. F(1) is attached to F(0) by a central stalk formed by the gamma and epsilon chains, while a peripheral stalk is formed by the delta and b chains.

It localises to the cell membrane. In terms of biological role, f(1)F(0) ATP synthase produces ATP from ADP in the presence of a proton or sodium gradient. F-type ATPases consist of two structural domains, F(1) containing the extramembraneous catalytic core and F(0) containing the membrane proton channel, linked together by a central stalk and a peripheral stalk. During catalysis, ATP synthesis in the catalytic domain of F(1) is coupled via a rotary mechanism of the central stalk subunits to proton translocation. Functionally, key component of the F(0) channel; it plays a direct role in translocation across the membrane. A homomeric c-ring of between 10-14 subunits forms the central stalk rotor element with the F(1) delta and epsilon subunits. This Bifidobacterium animalis subsp. lactis (strain AD011) protein is ATP synthase subunit c.